Here is an 86-residue protein sequence, read N- to C-terminus: Exodeoxyribonuclease 7 small subunit (86 aa).

The segment at 67–86 (LSDPAQPEASEPFDPPSHDG) is disordered.

This sequence belongs to the XseB family. Heterooligomer composed of large and small subunits.

The protein localises to the cytoplasm. The catalysed reaction is Exonucleolytic cleavage in either 5'- to 3'- or 3'- to 5'-direction to yield nucleoside 5'-phosphates.. Bidirectionally degrades single-stranded DNA into large acid-insoluble oligonucleotides, which are then degraded further into small acid-soluble oligonucleotides. This is Exodeoxyribonuclease 7 small subunit from Stenotrophomonas maltophilia (strain K279a).